The chain runs to 365 residues: tRNA/tmRNA (uracil-C(5))-methyltransferase (365 aa).

S-adenosyl-L-methionine is bound by residues Q189, Y217, N222, E238, and D298. C323 acts as the Nucleophile in catalysis. The active-site Proton acceptor is E357.

It belongs to the class I-like SAM-binding methyltransferase superfamily. RNA M5U methyltransferase family. TrmA subfamily.

It carries out the reaction uridine(54) in tRNA + S-adenosyl-L-methionine = 5-methyluridine(54) in tRNA + S-adenosyl-L-homocysteine + H(+). The enzyme catalyses uridine(341) in tmRNA + S-adenosyl-L-methionine = 5-methyluridine(341) in tmRNA + S-adenosyl-L-homocysteine + H(+). In terms of biological role, dual-specificity methyltransferase that catalyzes the formation of 5-methyluridine at position 54 (m5U54) in all tRNAs, and that of position 341 (m5U341) in tmRNA (transfer-mRNA). The polypeptide is tRNA/tmRNA (uracil-C(5))-methyltransferase (Shewanella woodyi (strain ATCC 51908 / MS32)).